The sequence spans 498 residues: ATP synthase subunit beta, chloroplastic (498 aa).

An ATP-binding site is contributed by G172–T179.

It belongs to the ATPase alpha/beta chains family. In terms of assembly, F-type ATPases have 2 components, CF(1) - the catalytic core - and CF(0) - the membrane proton channel. CF(1) has five subunits: alpha(3), beta(3), gamma(1), delta(1), epsilon(1). CF(0) has four main subunits: a(1), b(1), b'(1) and c(9-12).

It is found in the plastid. The protein resides in the chloroplast thylakoid membrane. It carries out the reaction ATP + H2O + 4 H(+)(in) = ADP + phosphate + 5 H(+)(out). In terms of biological role, produces ATP from ADP in the presence of a proton gradient across the membrane. The catalytic sites are hosted primarily by the beta subunits. The sequence is that of ATP synthase subunit beta, chloroplastic from Jasminum nudiflorum (Winter jasmine).